Here is a 916-residue protein sequence, read N- to C-terminus: DNA repair endonuclease XPF (916 aa).

The segment at 1–457 (MESGQPARRI…EVWMKFRKED (457 aa)) is helicase-like. 2 leucine-zipper regions span residues 233–254 (LNAC…DLSL) and 270–298 (LDPL…LQYL). Lysine 289 carries the N6-acetyllysine modification. The tract at residues 460 to 487 (KRIRKSHKRPKDPQNKERASTKERTLKK) is disordered. The segment covering 470-483 (KDPQNKERASTKER) has biased composition (basic and acidic residues). The Nuclear localization signal motif lies at 486-491 (KKKKRK). Residue lysine 500 forms a Glycyl lysine isopeptide (Lys-Gly) (interchain with G-Cter in SUMO2) linkage. 2 disordered regions span residues 502–526 (EELE…ESCP) and 660–679 (TASA…EQNG). Phosphoserine is present on serine 521. The tract at residues 658-813 (RGTASADVST…PSPHATAELF (156 aa)) is nuclease. The ERCC4 domain occupies 683 to 763 (SIVVDMREFR…RPVLLIEFDP (81 aa)). Serine 764 is modified (phosphoserine). The interval 837-905 (TLPESEKYNP…QLYDFIHTSF (69 aa)) is hhH2, dimerization with ERCC1. Position 911 is an N6-acetyllysine (lysine 911).

This sequence belongs to the XPF family. In terms of assembly, heterodimer composed of ERCC1 and ERCC4/XPF. Interacts with SLX4/BTBD12; this interaction is direct and links the ERCC1-ERCC4/XPF complex to SLX4, which may coordinate the action of the structure-specific endonuclease during DNA repair. It depends on Mg(2+) as a cofactor. Post-translationally, acetylation at Lys-911 by KAT5 promotes interaction with ERCC1 by disrupting a salt bridge between Glu-907 and Lys-911, thereby exposing a second binding site for ERCC1. Deacetylated by SIRT1.

The protein localises to the nucleus. The protein resides in the chromosome. Functionally, catalytic component of a structure-specific DNA repair endonuclease responsible for the 5-prime incision during DNA repair, and which is essential for nucleotide excision repair (NER) and interstrand cross-link (ICL) repair. This Homo sapiens (Human) protein is DNA repair endonuclease XPF.